A 168-amino-acid chain; its full sequence is Transcriptional regulator MraZ (168 aa).

SpoVT-AbrB domains lie at Glu-8 to Arg-51 and Ala-90 to Thr-140.

It belongs to the MraZ family. As to quaternary structure, forms oligomers.

It is found in the cytoplasm. Its subcellular location is the nucleoid. The protein is Transcriptional regulator MraZ of Cereibacter sphaeroides (strain ATCC 17025 / ATH 2.4.3) (Rhodobacter sphaeroides).